A 312-amino-acid chain; its full sequence is Mas-related G-protein coupled receptor member B3 (312 aa).

Residues M1–N31 are Extracellular-facing. A helical membrane pass occupies residues L32–L52. The Cytoplasmic segment spans residues G53–N67. A helical transmembrane segment spans residues L68–C88. Residues K89 to M106 are Extracellular-facing. A helical transmembrane segment spans residues F107 to I127. The Cytoplasmic portion of the chain corresponds to M128–H140. Residues T141 to M161 form a helical membrane-spanning segment. Over E162–N180 the chain is Extracellular. Residues I181–L201 form a helical membrane-spanning segment. Topologically, residues L202 to T220 are cytoplasmic. A helical membrane pass occupies residues I221–V241. Over D242 to H259 the chain is Extracellular. The helical transmembrane segment at I260–S280 threads the bilayer. The Cytoplasmic portion of the chain corresponds to I281–P312.

This sequence belongs to the G-protein coupled receptor 1 family. Mas subfamily.

The protein localises to the membrane. In terms of biological role, orphan receptor. Probably involved in the function of nociceptive neurons. May regulate nociceptor function and/or development, including the sensation or modulation of pain. The chain is Mas-related G-protein coupled receptor member B3 (Mrgprb3) from Mus musculus (Mouse).